Consider the following 469-residue polypeptide: Probable Xaa-Pro aminopeptidase PEPP (469 aa).

Aspartate 265, aspartate 276, glutamate 399, and glutamate 439 together coordinate Mn(2+).

This sequence belongs to the peptidase M24B family. The cofactor is Mn(2+).

It catalyses the reaction Release of any N-terminal amino acid, including proline, that is linked to proline, even from a dipeptide or tripeptide.. Catalyzes the removal of a penultimate prolyl residue from the N-termini of peptides. The polypeptide is Probable Xaa-Pro aminopeptidase PEPP (PEPP) (Coccidioides posadasii (strain RMSCC 757 / Silveira) (Valley fever fungus)).